Reading from the N-terminus, the 192-residue chain is uncharacterized protein (192 aa).

The first 17 residues, 1–17 (MFLHLILLAGLAPVVYL), serve as a signal peptide directing secretion.

This is an uncharacterized protein from Caenorhabditis elegans.